The sequence spans 344 residues: MTSNFSQPALQLCYENTNGSCIKTPYSPGPRVILYMVYGFGAVLAVCGNLLVVISVLHFKQLHSPANFLIASLASADFLVGISVMPFSMVRSIESCWYFGDAFCSLHSCCDVAFCYSSALHLCFISVDRYIAVTDPLVYPTKFTVSVSGICISISWILPLVYSSAVFYTGISAKGIESLVSALNCVGGCQVVVNQDWVLISFLLFFIPTVVMIILYSKIFLVAKQQAVKIETSVSGNRGESSSESHKARVAKRERKAAKTLGVTVVAFMVSWLPYTIDALVDAFMGFITPAYVYEICCWSAYYNSAMNPLIYAFFYPWFRKAIKLILSGKILKGHSSTTNLFSE.

Topologically, residues 1–31 (MTSNFSQPALQLCYENTNGSCIKTPYSPGPR) are extracellular. N4 and N18 each carry an N-linked (GlcNAc...) asparagine glycan. 2 disulfides stabilise this stretch: C21–C185 and C104–C189. The helical transmembrane segment at 32–52 (VILYMVYGFGAVLAVCGNLLV) threads the bilayer. Residues 53–67 (VISVLHFKQLHSPAN) are Cytoplasmic-facing. The chain crosses the membrane as a helical span at residues 68–88 (FLIASLASADFLVGISVMPFS). Residues 89 to 111 (MVRSIESCWYFGDAFCSLHSCCD) lie on the Extracellular side of the membrane. The helical transmembrane segment at 112–132 (VAFCYSSALHLCFISVDRYIA) threads the bilayer. The Cytoplasmic segment spans residues 133–146 (VTDPLVYPTKFTVS). The helical transmembrane segment at 147–167 (VSGICISISWILPLVYSSAVF) threads the bilayer. The Extracellular portion of the chain corresponds to 168 to 195 (YTGISAKGIESLVSALNCVGGCQVVVNQ). Residues 196–216 (DWVLISFLLFFIPTVVMIILY) form a helical membrane-spanning segment. Residues 217–260 (SKIFLVAKQQAVKIETSVSGNRGESSSESHKARVAKRERKAAKT) lie on the Cytoplasmic side of the membrane. The chain crosses the membrane as a helical span at residues 261-281 (LGVTVVAFMVSWLPYTIDALV). A topological domain (extracellular) is located at residue D282. The chain crosses the membrane as a helical span at residues 283–303 (AFMGFITPAYVYEICCWSAYY). At 304–344 (NSAMNPLIYAFFYPWFRKAIKLILSGKILKGHSSTTNLFSE) the chain is on the cytoplasmic side.

This sequence belongs to the G-protein coupled receptor 1 family. In terms of tissue distribution, specifically expressed in neurons of the olfactory epithelium.

It localises to the cell membrane. Olfactory receptor specific for trace amines, such ascyclohexylamine (1-MPD). Trace amine compounds are enriched in animal body fluids and act on trace amine-associated receptors (TAARs) to elicit both intraspecific and interspecific innate behaviors. Ligand-binding causes a conformation change that triggers signaling via G(s)-class of G alpha proteins (GNAL or GNAS). The chain is Trace amine-associated receptor 8c from Mus musculus (Mouse).